The chain runs to 78 residues: MASEQNIQTFRDFLTQYNLVAEQCFTSCVNEFGSRTVNAKEESCANNCLDKFLKMTQRVSQRFQEHQILNAQANGAAM.

A Twin CX3C motif motif is present at residues cysteine 24–cysteine 48. Disulfide bonds link cysteine 24–cysteine 48 and cysteine 28–cysteine 44.

The protein belongs to the small Tim family. In terms of assembly, heterohexamer; composed of 3 copies of tim-9/tin-9.1 and 3 copies of tim-10/tin-10, named soluble 70 kDa complex. The complex associates with the tim-22 component of the TIM22 complex. Interacts with multi-pass transmembrane proteins in transit.

The protein localises to the mitochondrion inner membrane. Functionally, mitochondrial intermembrane chaperone that participates in the import and insertion of multi-pass transmembrane proteins into the mitochondrial inner membrane. May also be required for the transfer of beta-barrel precursors from the TOM complex to the sorting and assembly machinery (SAM complex) of the outer membrane. Acts as a chaperone-like protein that protects the hydrophobic precursors from aggregation and guide them through the mitochondrial intermembrane space. In Caenorhabditis briggsae, this protein is Mitochondrial import inner membrane translocase subunit Tim9 (tin-9.1).